The following is a 1698-amino-acid chain: Cullin-7 (1698 aa).

Residues 315-357 form a disordered region; that stretch reads QASDRPRSSARSPGSIFQPQLADVSPGLPAAQAQPSFRRSRRF. Ser339 is modified (phosphoserine). The region spanning 360–433 is the CPH domain; sequence RSEFASGNTY…HWHMLEILGF (74 aa). Residues 601–611 show a composition bias toward basic and acidic residues; that stretch reads SEDAAKVEAKE. The tract at residues 601–623 is disordered; that stretch reads SEDAAKVEAKEPPSQSPNTPLQR. One can recognise a DOC domain in the interval 814–993; the sequence is PINIPFFDVF…HTRLFYMVRA (180 aa). Residues 1345–1370 form a disordered region; it reads GASGKEHKSEKEEEAGAAAVVDVAEG. Lys1576 participates in a covalent cross-link: Glycyl lysine isopeptide (Lys-Gly) (interchain with G-Cter in NEDD8).

Belongs to the cullin family. Component of the 3M complex, composed of core components CUL7, CCDC8 and OBSL1. Component of the Cul7-RING(FBXW8) complex consisting of CUL7, RBX1, SKP1 and FBXW8. Within the Cul7-RING(FBXW8) complex interacts with FBXW8 and RBX1, but not with SKP1. Interacts with CUL1 (via the C-terminal domain); the interaction seems to be mediated by FBXW8; it is likely specific to FBXW8, but not other F-box proteins. Interacts (via the CPH domain) with p53/TP53; the interaction preferentially involves tetrameric and dimeric p53/TP53; this interaction recruits p53/TP53 for ubiquitination by neddylated CUL1-RBX1. The CUL7-CUL9 heterodimer seems to interact specifically with p53/TP53. Interacts with FBXW8; interaction is mutually exclusive of binding to CUL9 or p53/TP53. Interacts with CUL9; leading to inhibited CUL9 activity. Interacts with OBSL1. Interacts (as part of the 3M complex) with HDAC4 and HDAC5; it is negatively regulated by ANKRA2. As to quaternary structure, (Microbial infection) Interacts with SV40 Large T antigen; this interaction seems to inhibit CUL7. Post-translationally, according to a report, may not be neddylated despite the conserved consensus site for neddylation at Lys-1576. Structural study of the Cul7-RING(FBXW8) reveals that both CUL7 and RBX1 are in orientations that are incompatible with neddylation. Highly expressed in fetal kidney and adult skeletal muscle. Also abundant in fetal brain, as well as in adult pancreas, kidney, placenta and heart. Detected in trophoblasts, lymphoblasts, osteoblasts, chondrocytes and skin fibroblasts.

The protein localises to the cytoplasm. It localises to the cytoskeleton. The protein resides in the microtubule organizing center. It is found in the centrosome. Its subcellular location is the perinuclear region. The protein localises to the golgi apparatus. Its pathway is protein modification; protein ubiquitination. Its function is as follows. Core component of the 3M and Cul7-RING(FBXW8) complexes, which mediate the ubiquitination and subsequent proteasomal degradation of target proteins. Core component of the 3M complex, a complex required to regulate microtubule dynamics and genome integrity. It is unclear how the 3M complex regulates microtubules, it could act by controlling the level of a microtubule stabilizer. The Cul7-RING(FBXW8) complex alone lacks ubiquitination activity and does not promote polyubiquitination and proteasomal degradation of p53/TP53. However it mediates recruitment of p53/TP53 for ubiquitination by neddylated CUL1-RBX1. Interaction with CUL9 is required to inhibit CUL9 activity and ubiquitination of BIRC5. The Cul7-RING(FBXW8) complex also mediates ubiquitination and consequent degradation of target proteins such as GORASP1, IRS1 and MAP4K1/HPK1. Ubiquitination of GORASP1 regulates Golgi morphogenesis and dendrite patterning in brain. Mediates ubiquitination and degradation of IRS1 in a mTOR-dependent manner: the Cul7-RING(FBXW8) complex recognizes and binds IRS1 previously phosphorylated by S6 kinase (RPS6KB1 or RPS6KB2). The Cul7-RING(FBXW8) complex also mediates ubiquitination of MAP4K1/HPK1: recognizes and binds autophosphorylated MAP4K1/HPK1, leading to its degradation, thereby affecting cell proliferation and differentiation. Acts as a regulator in trophoblast cell epithelial-mesenchymal transition and placental development. While the Cul7-RING(FBXW8) and the 3M complexes are associated and involved in common processes, CUL7 and the Cul7-RING(FBXW8) complex may have additional functions. Probably plays a role in the degradation of proteins involved in endothelial proliferation and/or differentiation. In Homo sapiens (Human), this protein is Cullin-7 (CUL7).